A 291-amino-acid chain; its full sequence is Trimeric intracellular cation channel type B (291 aa).

Over 1–15 (MESPWNELTLAFSRT) the chain is Lumenal. A helical membrane pass occupies residues 16–33 (SMFPFFDIAHYLVSVMAL). The Cytoplasmic segment spans residues 34–47 (KHQPGAAALAWKNP). The chain crosses the membrane as a helical span at residues 48-69 (LSSWFTAMLHCFGGGILSCVLL). At 70–80 (AEPPLRFLANN) the chain is on the lumenal side. A helical transmembrane segment spans residues 81 to 100 (TNILLASSIWYIAFFCPCDL). At 101-103 (ISQ) the chain is on the cytoplasmic side. The helical transmembrane segment at 104-122 (AYSFLPVQLLAAGMKEVTR) threads the bilayer. A 1,2-diacyl-sn-glycero-3-phospho-(1D-myo-inositol-4,5-bisphosphate)-binding residues include K118 and R122. Over 123 to 138 (TWKIVGGVTHANSYYK) the chain is Lumenal. Residues 139 to 156 (NGWIVMIAVGWARGAGGS) traverse the membrane as a helical segment. Over 157–179 (IITNFEQLVKGCWKPEAEEWLKM) the chain is Cytoplasmic. A helical transmembrane segment spans residues 180–196 (SYPAKVTLLGSVIFTFQ). Over 197-207 (QTKYLAISKHN) the chain is Lumenal. A helical transmembrane segment spans residues 208-225 (LMFLFTVFLVATKITMMI). Over 226 to 291 (TKTALVPFAC…VKKKHSKKTE (66 aa)) the chain is Cytoplasmic. A disordered region spans residues 257–291 (KSETKSSFNGTGSSTSKPVANASDKVKKKHSKKTE). The span at 261 to 274 (KSSFNGTGSSTSKP) shows a compositional bias: polar residues. Residue S262 is modified to Phosphoserine. Residues 282–291 (VKKKHSKKTE) are compositionally biased toward basic residues.

This sequence belongs to the TMEM38 family. In terms of assembly, homotrimer; conformation seems to be controled by binding to diacylglycerol (DAG).

It is found in the endoplasmic reticulum membrane. The enzyme catalyses K(+)(in) = K(+)(out). With respect to regulation, channel activity is activated by increased cytosolic Ca(2+) levels and blocked by luminal high Ca(2+) levels. In terms of biological role, intracellular monovalent cation channel required for maintenance of rapid intracellular calcium release. Acts as a potassium counter-ion channel that functions in synchronization with calcium release from intracellular stores. Activated by increased cytosolic Ca(2+) levels. This Bos taurus (Bovine) protein is Trimeric intracellular cation channel type B (TMEM38B).